Here is a 259-residue protein sequence, read N- to C-terminus: MIRKTQAIVLRTINYGDQSKIVTFFTRSFGKLTGLVKGYRNPKGKFASVLEIGNDLDLVLYKKDTREVQLITEAVLRAPMLGATSSLEQLSALHQTLELIRLTTENDDAHLGVFELLHATLQKINVSRKNHISFFFYFQVQLISLLGFRLNFQKCVLTGKSLSEKALPKDARVVLLAEHGGFALQLAAEERGFAGMPVSTDAFKAVQWLSLVAIESVENLFLEKLVINEIFQLLDSYFRFHIDDLPAFRSREIFNQLVF.

It belongs to the RecO family.

Functionally, involved in DNA repair and RecF pathway recombination. This chain is DNA repair protein RecO, found in Chloroherpeton thalassium (strain ATCC 35110 / GB-78).